We begin with the raw amino-acid sequence, 546 residues long: Chaperonin GroEL (546 aa).

Residues 30-33 (TLGP), lysine 51, 87-91 (DGTTT), glycine 415, 479-481 (NAA), and aspartate 495 contribute to the ATP site. The disordered stretch occupies residues 527-546 (DESAAPAMPGGMGGMGDMGM). Over residues 536–546 (GGMGGMGDMGM) the composition is skewed to gly residues.

The protein belongs to the chaperonin (HSP60) family. Forms a cylinder of 14 subunits composed of two heptameric rings stacked back-to-back. Interacts with the co-chaperonin GroES.

Its subcellular location is the cytoplasm. The catalysed reaction is ATP + H2O + a folded polypeptide = ADP + phosphate + an unfolded polypeptide.. Functionally, together with its co-chaperonin GroES, plays an essential role in assisting protein folding. The GroEL-GroES system forms a nano-cage that allows encapsulation of the non-native substrate proteins and provides a physical environment optimized to promote and accelerate protein folding. The polypeptide is Chaperonin GroEL (Acidovorax sp. (strain JS42)).